The sequence spans 719 residues: MVQTYRSPVRIYKHPFEIVMAAYEMRFPTCPQIPIFVGSEVTYEYKSVDGAEWVIDRKCQLNVEAPYLVKKIAGVDYVYFSQKNSLDRRKRTLDIEATNISFSSRINVKENCTYYVHAENENWTCFEQSASLDVKNFFGLESAVEKLAVRQYGANLAKGKEILEFFIEELLKKTTHIERFRDADQEETTSATDSAIEMKELSDGDAVLVNDRPPMLAAETDEMRTARATASFDDADSKLEAEYIRRFLGQLSPLEESRLCEIKYSLQAHHKGKLPNDAHLLRFLRARDFDVAKAKDMVHASIIWRKQHNVDKILEEWTRPTVIKQYFPGCWHNSDKAGRPMYILRFGQLDTKGMLRSCGVENLVKLTLSICEDGLQRAAEATRKLGTPISSWSLVVDLDGLSMRHLWRPGVQCLLKIIEIVEANYPETMGQVLVVRAPRVFPVLWTLISPFIDEKTRKKFMVSGGSGGDLKEELRKHIEEKFIPDFLGGSCLTTNCGLGGHVPKSMYLPVEEQEGASSSEDPLHSTYTSTATWRGYPVEVVIPIETAGCVLTWDFDVLKNDCEFSLYFSTEKIEQPAVRDGAQSPTTILNPVEMVSAAIGGASHQHPDLQCAPELKIGTPQLRLEEKAVVFQEGDSMQGSHYCSRAGTYIMQWRVPETAAGHSSTFDFGSHKCRLIYYYEILNSENFRGSVASLESCRSSSFSSIAPPTPPTPGTPRNP.

The PRELI/MSF1 domain maps to 2-175; sequence VQTYRSPVRI…FIEELLKKTT (174 aa). The 177-residue stretch at 319–495 folds into the CRAL-TRIO domain; it reads RPTVIKQYFP…FLGGSCLTTN (177 aa). The GOLD domain maps to 524–681; that stretch reads HSTYTSTATW…KCRLIYYYEI (158 aa). The tract at residues 700–719 is disordered; it reads SSFSSIAPPTPPTPGTPRNP. A compositionally biased stretch (pro residues) spans 707–719; it reads PPTPPTPGTPRNP.

In Caenorhabditis elegans, this protein is CRAL-TRIO domain-containing protein T23G5.2.